The following is a 303-amino-acid chain: Probable 5-dehydro-4-deoxyglucarate dehydratase (303 aa).

Belongs to the DapA family.

It catalyses the reaction 5-dehydro-4-deoxy-D-glucarate + H(+) = 2,5-dioxopentanoate + CO2 + H2O. Its pathway is carbohydrate acid metabolism; D-glucarate degradation; 2,5-dioxopentanoate from D-glucarate: step 2/2. The chain is Probable 5-dehydro-4-deoxyglucarate dehydratase from Pseudomonas savastanoi pv. phaseolicola (strain 1448A / Race 6) (Pseudomonas syringae pv. phaseolicola (strain 1448A / Race 6)).